The primary structure comprises 67 residues: Protein AaeX (67 aa).

Transmembrane regions (helical) follow at residues 3 to 23 (LFPV…ELLL) and 43 to 63 (FVWH…YLIS).

It belongs to the AaeX family.

The protein resides in the cell membrane. The polypeptide is Protein AaeX (Escherichia coli O1:K1 / APEC).